Here is a 319-residue protein sequence, read N- to C-terminus: Acetyl-coenzyme A carboxylase carboxyl transferase subunit alpha (319 aa).

The 262-residue stretch at 35–296 (NLDEEVQRLR…KAQLLIDLAE (262 aa)) folds into the CoA carboxyltransferase C-terminal domain.

It belongs to the AccA family. Acetyl-CoA carboxylase is a heterohexamer composed of biotin carboxyl carrier protein (AccB), biotin carboxylase (AccC) and two subunits each of ACCase subunit alpha (AccA) and ACCase subunit beta (AccD).

The protein localises to the cytoplasm. The enzyme catalyses N(6)-carboxybiotinyl-L-lysyl-[protein] + acetyl-CoA = N(6)-biotinyl-L-lysyl-[protein] + malonyl-CoA. Its pathway is lipid metabolism; malonyl-CoA biosynthesis; malonyl-CoA from acetyl-CoA: step 1/1. In terms of biological role, component of the acetyl coenzyme A carboxylase (ACC) complex. First, biotin carboxylase catalyzes the carboxylation of biotin on its carrier protein (BCCP) and then the CO(2) group is transferred by the carboxyltransferase to acetyl-CoA to form malonyl-CoA. This Photorhabdus laumondii subsp. laumondii (strain DSM 15139 / CIP 105565 / TT01) (Photorhabdus luminescens subsp. laumondii) protein is Acetyl-coenzyme A carboxylase carboxyl transferase subunit alpha.